We begin with the raw amino-acid sequence, 399 residues long: Succinate--CoA ligase [ADP-forming] subunit beta (399 aa).

Positions 9 to 254 (KAVLAEFGVA…ESEEDPKEIE (246 aa)) constitute an ATP-grasp domain. ATP contacts are provided by residues lysine 46, 53–55 (GRG), glutamate 109, alanine 112, and glutamate 117. Asparagine 209 and aspartate 223 together coordinate Mg(2+). Residues asparagine 274 and 331–333 (GIM) contribute to the substrate site.

It belongs to the succinate/malate CoA ligase beta subunit family. As to quaternary structure, heterotetramer of two alpha and two beta subunits. Requires Mg(2+) as cofactor.

It carries out the reaction succinate + ATP + CoA = succinyl-CoA + ADP + phosphate. The enzyme catalyses GTP + succinate + CoA = succinyl-CoA + GDP + phosphate. It participates in carbohydrate metabolism; tricarboxylic acid cycle; succinate from succinyl-CoA (ligase route): step 1/1. Succinyl-CoA synthetase functions in the citric acid cycle (TCA), coupling the hydrolysis of succinyl-CoA to the synthesis of either ATP or GTP and thus represents the only step of substrate-level phosphorylation in the TCA. The beta subunit provides nucleotide specificity of the enzyme and binds the substrate succinate, while the binding sites for coenzyme A and phosphate are found in the alpha subunit. This chain is Succinate--CoA ligase [ADP-forming] subunit beta, found in Phenylobacterium zucineum (strain HLK1).